Reading from the N-terminus, the 6907-residue chain is Fibrous sheath-interacting protein 2 (6907 aa).

The interval 273-292 (EERIEEQQHRNREESDRKKQ) is disordered. Serine 430 bears the Phosphoserine mark. Disordered regions lie at residues 439–472 (SQAFLDPSKEEKETNADWDGRPTKRSSYLCESGP), 954–990 (FQKSRQPRISSPSDTKEKYRLTGTRLSNSPRSGRPFP), 1545–1573 (VQEDNKEETKSKAKPVAPVSSKTPSTKEM), 3202–3257 (VSSD…FDQT), 5650–5672 (RTSSNEGRRDSPTQTCRDEEHHS), 5725–5781 (SAQS…KPGI), 5850–5880 (DKGNQFPGGKVSSVPKVPPRYKEPTTDEAPS), and 6852–6874 (GSANPSKEVISETPKPDVSKQGS). Residues 445–460 (PSKEEKETNADWDGRP) show a composition bias toward basic and acidic residues. Over residues 954–966 (FQKSRQPRISSPS) the composition is skewed to polar residues. 2 stretches are compositionally biased toward basic and acidic residues: residues 1545-1555 (VQEDNKEETKS) and 3213-3229 (SVEDTVKNSEPTKRPDS). The span at 5728 to 5741 (SVTTKKVSSSTNKN) shows a compositional bias: low complexity. Residues 5738–5766 (TNKNISAKEKEEEEREKEKVREEIKSEPS) adopt a coiled-coil conformation. Residues 5743–5778 (SAKEKEEEEREKEKVREEIKSEPSKPDDPQNQRESK) show a composition bias toward basic and acidic residues.

May interact with AKAP4. Predominantly expressed in testis.

Its function is as follows. Plays a role in spermatogenesis. This Homo sapiens (Human) protein is Fibrous sheath-interacting protein 2 (FSIP2).